Reading from the N-terminus, the 61-residue chain is MLNIFNLICICFNSALFSSTFLVAKLPEAYAFLNPIVDVMPVIPLFFLLLAFVWQAAVSFR.

Positions 1–24 (MLNIFNLICICFNSALFSSTFLVA) are excised as a propeptide. Residues 40–60 (MPVIPLFFLLLAFVWQAAVSF) form a helical membrane-spanning segment.

It belongs to the PsbK family. PSII is composed of 1 copy each of membrane proteins PsbA, PsbB, PsbC, PsbD, PsbE, PsbF, PsbH, PsbI, PsbJ, PsbK, PsbL, PsbM, PsbT, PsbX, PsbY, PsbZ, Psb30/Ycf12, at least 3 peripheral proteins of the oxygen-evolving complex and a large number of cofactors. It forms dimeric complexes.

It localises to the plastid. The protein resides in the chloroplast thylakoid membrane. Functionally, one of the components of the core complex of photosystem II (PSII). PSII is a light-driven water:plastoquinone oxidoreductase that uses light energy to abstract electrons from H(2)O, generating O(2) and a proton gradient subsequently used for ATP formation. It consists of a core antenna complex that captures photons, and an electron transfer chain that converts photonic excitation into a charge separation. The sequence is that of Photosystem II reaction center protein K from Sinapis alba (White mustard).